Here is a 431-residue protein sequence, read N- to C-terminus: Glucose-1-phosphate adenylyltransferase (431 aa).

Lys-39 serves as a coordination point for beta-D-fructose 1,6-bisphosphate. Residues Arg-40, His-46, and Arg-52 each contribute to the AMP site. Tyr-114 provides a ligand contact to alpha-D-glucose 1-phosphate. Arg-130 serves as a coordination point for AMP. Residues Gly-179, 194–195 (EK), and Ser-212 each bind alpha-D-glucose 1-phosphate. Glu-370 and Arg-386 together coordinate AMP. Residues 419-423 (REMLR) and 429-431 (QER) each bind beta-D-fructose 1,6-bisphosphate.

The protein belongs to the bacterial/plant glucose-1-phosphate adenylyltransferase family. In terms of assembly, homotetramer.

It catalyses the reaction alpha-D-glucose 1-phosphate + ATP + H(+) = ADP-alpha-D-glucose + diphosphate. It functions in the pathway glycan biosynthesis; glycogen biosynthesis. Allosterically activated by fructose-1,6-bisphosphate (F16BP) and inhibited by AMP. Its function is as follows. Involved in the biosynthesis of ADP-glucose, a building block required for the elongation reactions to produce glycogen. Catalyzes the reaction between ATP and alpha-D-glucose 1-phosphate (G1P) to produce pyrophosphate and ADP-Glc. This chain is Glucose-1-phosphate adenylyltransferase, found in Salmonella arizonae (strain ATCC BAA-731 / CDC346-86 / RSK2980).